The primary structure comprises 501 residues: Beta-secretase 1 (501 aa).

Residues 1–21 form the signal peptide; it reads MAPALRWLLLWVGSGMLPAQG. Positions 22–45 are excised as a propeptide; sequence THLGIRLPLRSGLAGPPLGLRLPR. The Extracellular segment spans residues 22 to 457; the sequence is THLGIRLPLR…PQTDESTLMT (436 aa). Residues 75–416 form the Peptidase A1 domain; sequence YYVEMTVGSP…DRARKRIGFA (342 aa). Asp93 is an active-site residue. Residue Lys126 is modified to N6-acetyllysine. N-linked (GlcNAc...) asparagine glycans are attached at residues Asn153, Asn172, and Asn223. 3 cysteine pairs are disulfide-bonded: Cys216-Cys420, Cys278-Cys443, and Cys330-Cys380. An N6-acetyllysine mark is found at Lys275, Lys279, and Lys285. Residue Asp289 is part of the active site. Residues Lys299, Lys300, and Lys307 each carry the N6-acetyllysine modification. N-linked (GlcNAc...) asparagine glycosylation occurs at Asn354. Residues 458 to 478 traverse the membrane as a helical segment; the sequence is IAYVMAAICALFMLPLCLMVC. 4 S-palmitoyl cysteine lipidation sites follow: Cys474, Cys478, Cys482, and Cys485. Residues 479 to 501 are Cytoplasmic-facing; sequence QWRCLRCLRHQHDDFADDISLLK. Residues 479–501 form an interaction with RTN3 region; the sequence is QWRCLRCLRHQHDDFADDISLLK. The DXXLL signature appears at 496–500; the sequence is DISLL. Ser498 carries the post-translational modification Phosphoserine. Lys501 is covalently cross-linked (Glycyl lysine isopeptide (Lys-Gly) (interchain with G-Cter in ubiquitin)).

Belongs to the peptidase A1 family. In terms of assembly, monomer. Interacts (via DXXLL motif) with GGA1, GGA2 and GGA3 (via their VHS domain); the interaction highly increases when BACE1 is phosphorylated at Ser-498. Interacts with RTN1; RTN2; RTN3 and RTN4; the interaction leads to inhibition of amyloid precursor protein processing. Interacts with SNX6. Interacts with PCSK9. Interacts with NAT8 and NAT8B. Interacts with BIN1. Interacts (via extracellular domain) with ADAM10 (via extracellular domain). Interacts with SORL1; this interaction may affect binding with APP and hence reduce APP cleavage. Interacts with NRDC AND NRG1. Post-translationally, palmitoylation mediates lipid raft localization. In terms of processing, acetylated in the endoplasmic reticulum at Lys-126, Lys-275, Lys-279, Lys-285, Lys-299, Lys-300 and Lys-307. Acetylation by NAT8 and NAT8B is transient and deacetylation probably occurs in the Golgi. Acetylation regulates the maturation, the transport to the plasma membrane, the stability and the expression of the protein. Ubiquitinated at Lys-501, ubiquitination leads to lysosomal degradation. Monoubiquitinated and 'Lys-63'-linked polyubitinated. Deubiquitnated by USP8; inhibits lysosomal degradation. Post-translationally, phosphorylation at Ser-498 is required for interaction with GGA1 and retrograded transport from endosomal compartments to the trans-Golgi network. Non-phosphorylated BACE1 enters a direct recycling route to the cell surface. In terms of processing, N-Glycosylated. Addition of a bisecting N-acetylglucosamine by MGAT3 blocks lysosomal targeting, further degradation and is required for maintaining stability under stress conditions.

It is found in the cell membrane. The protein resides in the golgi apparatus. The protein localises to the trans-Golgi network. It localises to the endoplasmic reticulum. Its subcellular location is the endosome. It is found in the cell surface. The protein resides in the cytoplasmic vesicle membrane. The protein localises to the membrane raft. It localises to the lysosome. Its subcellular location is the late endosome. It is found in the early endosome. The protein resides in the recycling endosome. The protein localises to the cell projection. It localises to the axon. Its subcellular location is the dendrite. The catalysed reaction is Broad endopeptidase specificity. Cleaves Glu-Val-Asn-Leu-|-Asp-Ala-Glu-Phe in the Swedish variant of Alzheimer's amyloid precursor protein.. Its activity is regulated as follows. Inhibited by RTN3 and RTN4. Its function is as follows. Responsible for the proteolytic processing of the amyloid precursor protein (APP). Cleaves at the N-terminus of the A-beta peptide sequence, between residues 671 and 672 of APP, leads to the generation and extracellular release of beta-cleaved soluble APP, and a corresponding cell-associated C-terminal fragment which is later released by gamma-secretase. Cleaves CHL1. The polypeptide is Beta-secretase 1 (Bace1) (Rattus norvegicus (Rat)).